A 230-amino-acid chain; its full sequence is Orotidine 5'-phosphate decarboxylase (230 aa).

Residues D10, K32, D59–T68, T119, R180, Q189, G209, and R210 contribute to the substrate site. K61 functions as the Proton donor in the catalytic mechanism.

This sequence belongs to the OMP decarboxylase family. Type 1 subfamily. In terms of assembly, homodimer.

It carries out the reaction orotidine 5'-phosphate + H(+) = UMP + CO2. It functions in the pathway pyrimidine metabolism; UMP biosynthesis via de novo pathway; UMP from orotate: step 2/2. Catalyzes the decarboxylation of orotidine 5'-monophosphate (OMP) to uridine 5'-monophosphate (UMP). The sequence is that of Orotidine 5'-phosphate decarboxylase from Haemophilus influenzae (strain 86-028NP).